The chain runs to 919 residues: Leucine--tRNA ligase (919 aa).

Residues 83 to 93 (PYPSGKLHMGH) carry the 'HIGH' region motif. Positions 670 to 674 (KMSKS) match the 'KMSKS' region motif. Lys673 contacts ATP.

The protein belongs to the class-I aminoacyl-tRNA synthetase family.

The protein resides in the cytoplasm. The enzyme catalyses tRNA(Leu) + L-leucine + ATP = L-leucyl-tRNA(Leu) + AMP + diphosphate. This Psychrobacter cryohalolentis (strain ATCC BAA-1226 / DSM 17306 / VKM B-2378 / K5) protein is Leucine--tRNA ligase.